We begin with the raw amino-acid sequence, 261 residues long: Kallikrein 1-related peptidase b21 (261 aa).

The signal sequence occupies residues 1–17 (MRFLILFLALSLGEIDA). The propeptide at 18–24 (APPVQSR) is activation peptide. One can recognise a Peptidase S1 domain in the interval 25–258 (IVGGFNCEKN…FTSWIKDTMA (234 aa)). 5 disulfide bridges follow: cysteine 31-cysteine 173, cysteine 50-cysteine 66, cysteine 152-cysteine 219, cysteine 184-cysteine 198, and cysteine 209-cysteine 234. The Charge relay system role is filled by histidine 65. Asparagine 102 carries an N-linked (GlcNAc...) asparagine glycan. The Charge relay system role is filled by aspartate 120. Catalysis depends on serine 213, which acts as the Charge relay system.

This sequence belongs to the peptidase S1 family. Kallikrein subfamily. As to expression, expressed in testis and submaxillary gland. In the testis, expression localized specifically to Leydig cells in the interstitial tissues.

The enzyme catalyses Preferential cleavage of Arg-|-Xaa bonds in small molecule substrates. Highly selective action to release kallidin (lysyl-bradykinin) from kininogen involves hydrolysis of Met-|-Xaa or Leu-|-Xaa.. With respect to regulation, inhibited by protease inhibitors diisopropylfluorophosphate, leupeptin, antipain, benzamidine, phenylmethylsulfonyl fluoride and soybean trypsin inhibitor. Its function is as follows. Glandular kallikreins cleave Met-Lys and Arg-Ser bonds in kininogen to release Lys-bradykinin. Displays trypsin-like substrate specificity and shows activity towards casein, gelatin, fibronectin and IGFBP3. In Mus musculus (Mouse), this protein is Kallikrein 1-related peptidase b21 (Klk1b21).